Reading from the N-terminus, the 175-residue chain is Protein MAL2 (175 aa).

Topologically, residues 1–33 are cytoplasmic; sequence MSAGGAVPPPPNPAVSFPAPRVTLPAGPDILRT. In terms of domain architecture, MARVEL spans 30-174; the sequence is ILRTYSGAFV…SLGLALRRWR (145 aa). Residues 34 to 54 form a helical membrane-spanning segment; it reads YSGAFVCLEIVLGGLVWILVA. Residues 55 to 65 lie on the Lumenal side of the membrane; sequence SSNVPLPLLQG. A helical membrane pass occupies residues 66–86; the sequence is WVMFVSVTAFFFSLLFLGLFL. The Cytoplasmic segment spans residues 87-101; sequence SGMVTQIDANWNFLD. Residues 102–122 traverse the membrane as a helical segment; sequence FVYHFIVFVFYFGAFLLEAAA. Residues 123–148 are Lumenal-facing; sequence TSLHDLQCNTTMTVKPLLNDNQYNIN. Asn-131 carries an N-linked (GlcNAc...) asparagine glycan. A helical membrane pass occupies residues 149–169; it reads VAATVFAFMTTACYGCSLGLA. Over 170 to 175 the chain is Cytoplasmic; that stretch reads LRRWRP.

This sequence belongs to the MAL family. Interacts with TPD52L2.

It is found in the cell membrane. The protein resides in the apical cell membrane. Functionally, member of the machinery of polarized transport. Required for the indirect transcytotic route at the step of the egress of the transcytosing cargo from perinuclear endosomes in order for it to travel to the apical surface via a raft-dependent pathway. This chain is Protein MAL2 (Mal2), found in Mus musculus (Mouse).